Reading from the N-terminus, the 3994-residue chain is Hybrid PKS-NRPs synthetase opdA (3994 aa).

Residues 6-442 (PEPIAIVGSS…GTNSHVILES (437 aa)) enclose the Ketosynthase family 3 (KS3) domain. Active-site for beta-ketoacyl synthase activity residues include Cys179, His316, and His362. Positions 559 to 881 (VFTGQGAQWP…LKRDSNDVEA (323 aa)) are malonyl-CoA:ACP transacylase (MAT) domain. Residues 951-1085 (HELLGRRTHD…GRLIIHLGET (135 aa)) form an N-terminal hotdog fold region. The tract at residues 951-1251 (HELLGRRTHD…SVKPMAPPTA (301 aa)) is dehydratase (DH) domain. A PKS/mFAS DH domain is found at 951 to 1252 (HELLGRRTHD…VKPMAPPTAE (302 aa)). His983 functions as the Proton acceptor; for dehydratase activity in the catalytic mechanism. The tract at residues 1100 to 1252 (LLSVDTDEGY…VKPMAPPTAE (153 aa)) is C-terminal hotdog fold. Asp1159 (proton donor; for dehydratase activity) is an active-site residue. A methyltransferase (MT) domain region spans residues 1292-1593 (DRVVLYYVQR…VDLAFHDLPD (302 aa)). The interval 2123–2297 (TYLMVGMAGG…ASIIHIGFVT (175 aa)) is ketoreductase (KR) domain. The Carrier 1 domain occupies 2406–2483 (EAVEITQKAF…QICTNAAKQL (78 aa)). Ser2443 bears the O-(pantetheine 4'-phosphoryl)serine mark. The tract at residues 2486-2575 (QKGGQEPSEQ…FDPDDRDYNP (90 aa)) is disordered. 2 stretches are compositionally biased toward polar residues: residues 2505–2514 (LHVSQGSLHT) and 2522–2546 (TETS…SVTD). Positions 2547-2556 (TVEKRDKGDI) are enriched in basic and acidic residues. A compositionally biased stretch (acidic residues) spans 2557–2570 (SVDEGPNEQFDPDD). Residues 2582-3007 (RLSSGQSRIY…SNTYMTVAKI (426 aa)) form a condensation (C) domain region. An adenylation (A) (KR) domain region spans residues 3043–3436 (HETNREDLAI…DGSLVFLGRL (394 aa)). One can recognise a Carrier 2 domain in the interval 3553 to 3630 (PKLSLRQSEL…KMTMLVDLER (78 aa)). Ser3590 bears the O-(pantetheine 4'-phosphoryl)serine mark. The tract at residues 3679-3895 (TGATGFLGGS…FDFKKVEEVA (217 aa)) is reductase (RED) domain.

It in the C-terminal section; belongs to the NRP synthetase family. Pantetheine 4'-phosphate is required as a cofactor.

The protein operates within secondary metabolite biosynthesis. Functionally, hybrid PKS-NRPS synthetase; part of the gene cluster that mediates the biosynthesis of oxopyrrolidines, polyketide-amino acid hybrid compounds with feature structures of tetramic acid. The polyketide chain is first assembled by the highly reducing PKS module of opdA using acetyl-CoA as the starter unit and five malonyl-CoA as the extender units. OpdC acts as trans-acting enoyl reductase and reduces the terminal alkenyl to alkane. The 17R in oxopyrrolidine A and 15R, 17S in oxopyrrolidine B are generated by non-stereospecific catalysis of the ketoreductase (KR) domain and enoyl reductases. Then the polyketides with specific configurations are transferred to the NRPS module of opdA and linked to L-tyrosine to form an amide bond. Finally, the oxopyrrolidines are offloaded through a Dieckmann cyclization catalyzed by the terminal D domain to give a tetramic acid moiety. In Penicillium oxalicum (strain 114-2 / CGMCC 5302) (Penicillium decumbens), this protein is Hybrid PKS-NRPs synthetase opdA.